We begin with the raw amino-acid sequence, 655 residues long: Probable alpha-galactosidase D (655 aa).

Residues M1 to A16 form the signal peptide. N-linked (GlcNAc...) asparagine glycosylation is found at N87 and N93. Cysteines 126 and 153 form a disulfide. The active-site Nucleophile is the D151. Residue E196–D200 participates in substrate binding. Residue D218 is the Proton donor of the active site. N-linked (GlcNAc...) asparagine glycosylation is found at N432, N482, N502, N540, and N579.

This sequence belongs to the glycosyl hydrolase 27 family.

Its subcellular location is the secreted. The catalysed reaction is Hydrolysis of terminal, non-reducing alpha-D-galactose residues in alpha-D-galactosides, including galactose oligosaccharides, galactomannans and galactolipids.. Hydrolyzes a variety of simple alpha-D-galactoside as well as more complex molecules such as oligosaccharides and polysaccharides. The polypeptide is Probable alpha-galactosidase D (aglD) (Aspergillus terreus (strain NIH 2624 / FGSC A1156)).